Consider the following 260-residue polypeptide: 33 kDa inner dynein arm light chain, axonemal (260 aa).

Residues 1 to 66 form a disordered region; sequence MIPPNASLVK…PVESQKAQQT (66 aa). The stretch at 177–260 forms a coiled coil; that stretch reads MRKALQAEQG…LEGIIAPNKK (84 aa).

Belongs to the inner dynein arm light chain family. May undergo some post-translational modifications that shift its mobility on SDS gels.

May play a dynamic role in flagellar motility. The sequence is that of 33 kDa inner dynein arm light chain, axonemal from Strongylocentrotus purpuratus (Purple sea urchin).